We begin with the raw amino-acid sequence, 142 residues long: ATP synthase epsilon chain (142 aa).

This sequence belongs to the ATPase epsilon chain family. As to quaternary structure, F-type ATPases have 2 components, CF(1) - the catalytic core - and CF(0) - the membrane proton channel. CF(1) has five subunits: alpha(3), beta(3), gamma(1), delta(1), epsilon(1). CF(0) has three main subunits: a, b and c.

The protein localises to the cell inner membrane. Produces ATP from ADP in the presence of a proton gradient across the membrane. In Shewanella piezotolerans (strain WP3 / JCM 13877), this protein is ATP synthase epsilon chain.